The sequence spans 309 residues: Low density lipoprotein receptor adapter protein 1-A (309 aa).

Positions 41–195 (LLEGMLFHLK…SGGEGASSSQ (155 aa)) constitute a PID domain. The disordered stretch occupies residues 179–199 (EKREKSGSGGEGASSSQSDGS). Residues 213–217 (LLDLE) carry the Clathrin box motif. The segment at 250 to 277 (WELDDGLDEAFARLAESRTNPQVLDIGL) is AP-2 complex binding. Residues 258-267 (EAFARLAESR) carry the [DE]-X(1,2)-F-X-X-[FL]-X-X-X-R motif motif.

As to quaternary structure, interacts (via PID domain) with ldlr (via NPXY motif). Binds to soluble clathrin trimers and to the adapter protein complex 2 (AP-2, beta 2 subunit). Binds to phosphoinositides, which regulate clathrin bud assembly at the cell surface. Interacts with the VLDL receptor (vldlr). Interacts with the vitellogenin receptor. Expressed at high level during oogenesis and embryogenesis. Found in the oocyte vegetal cortex. Found at low level in the adult liver and spleen. Found at very low level in testis and heart.

The protein resides in the cytoplasm. Functionally, adapter protein (clathrin-associated sorting protein (CLASP)) required for efficient endocytosis of the LDL receptor (LDLR). Also involved in the vitellogenin receptor mediated endocytosis of nutrients during oogenesis. This Xenopus laevis (African clawed frog) protein is Low density lipoprotein receptor adapter protein 1-A.